Here is a 450-residue protein sequence, read N- to C-terminus: Bifunctional protein GlmU (450 aa).

Residues 1–229 (MRRHAIILAA…VEEIMGVNDR (229 aa)) are pyrophosphorylase. UDP-N-acetyl-alpha-D-glucosamine-binding positions include 8 to 11 (LAAG), K22, Q72, and 77 to 78 (GT). Residue D102 coordinates Mg(2+). UDP-N-acetyl-alpha-D-glucosamine is bound by residues G139, E154, and N227. A Mg(2+)-binding site is contributed by N227. Residues 230–250 (VMLSQAEKAMQRRTNHYHMLN) form a linker region. Residues 251–450 (GVTIIDPDST…RQTTKEGYRK (200 aa)) are N-acetyltransferase. UDP-N-acetyl-alpha-D-glucosamine contacts are provided by R332 and K350. H362 functions as the Proton acceptor in the catalytic mechanism. UDP-N-acetyl-alpha-D-glucosamine is bound by residues Y365 and N376. Residues 385–386 (NY), A422, and R439 contribute to the acetyl-CoA site.

The protein in the N-terminal section; belongs to the N-acetylglucosamine-1-phosphate uridyltransferase family. It in the C-terminal section; belongs to the transferase hexapeptide repeat family. In terms of assembly, homotrimer. Mg(2+) serves as cofactor.

The protein resides in the cytoplasm. The catalysed reaction is alpha-D-glucosamine 1-phosphate + acetyl-CoA = N-acetyl-alpha-D-glucosamine 1-phosphate + CoA + H(+). It catalyses the reaction N-acetyl-alpha-D-glucosamine 1-phosphate + UTP + H(+) = UDP-N-acetyl-alpha-D-glucosamine + diphosphate. Its pathway is nucleotide-sugar biosynthesis; UDP-N-acetyl-alpha-D-glucosamine biosynthesis; N-acetyl-alpha-D-glucosamine 1-phosphate from alpha-D-glucosamine 6-phosphate (route II): step 2/2. The protein operates within nucleotide-sugar biosynthesis; UDP-N-acetyl-alpha-D-glucosamine biosynthesis; UDP-N-acetyl-alpha-D-glucosamine from N-acetyl-alpha-D-glucosamine 1-phosphate: step 1/1. It functions in the pathway bacterial outer membrane biogenesis; LPS lipid A biosynthesis. Catalyzes the last two sequential reactions in the de novo biosynthetic pathway for UDP-N-acetylglucosamine (UDP-GlcNAc). The C-terminal domain catalyzes the transfer of acetyl group from acetyl coenzyme A to glucosamine-1-phosphate (GlcN-1-P) to produce N-acetylglucosamine-1-phosphate (GlcNAc-1-P), which is converted into UDP-GlcNAc by the transfer of uridine 5-monophosphate (from uridine 5-triphosphate), a reaction catalyzed by the N-terminal domain. This chain is Bifunctional protein GlmU, found in Staphylococcus aureus (strain Mu50 / ATCC 700699).